Reading from the N-terminus, the 121-residue chain is Holin-like protein CidA 1 (121 aa).

Helical transmembrane passes span 7-24 (SGQILLLFCFAWTGEWIA), 28-50 (HLPVPGSIIGIFLLLISLKFNLV), 62-81 (LLKELILFFIPSAVAVIRYR), and 91-113 (LILIIMISTLCVTLVTGLLTELL).

Belongs to the CidA/LrgA family. CidA subfamily.

It localises to the cell membrane. Its function is as follows. Increases the activity of extracellular murein hydrolases possibly by mediating their export via hole formation. Inhibited by the antiholin-like proteins LrgAB. In an unstressed cell, the LrgAB products probably inhibit the function of the CidA protein. When a cell is stressed by the addition of antibiotics or by other factors in the environment, CidA possibly oligomerizes within the bacterial cell membrane, creating lesions that disrupt the proton motive force, which in turn results in loss of cell viability. These lesions are also hypothesized to regulate the subsequent cell lysis by either allowing the murein hydrolases access to the cell wall substrate and/or regulating their activity by a possible change in the cell wall pH that results from loss of membrane potential. This Bacillus cereus (strain ATCC 14579 / DSM 31 / CCUG 7414 / JCM 2152 / NBRC 15305 / NCIMB 9373 / NCTC 2599 / NRRL B-3711) protein is Holin-like protein CidA 1 (cidA1).